Reading from the N-terminus, the 123-residue chain is MMGRNGIRLALKRSFSTYQPPVVEITNITKLWPTLRPEVRDEIKEYLRWRMQEDWRHIPLEETKAAYFLSYGPCGGRSKGNEWNVGYTGMRIVFNLVLFGGAATAFYNWKQDKKLEEQLRDLV.

Residues 1–37 (MMGRNGIRLALKRSFSTYQPPVVEITNITKLWPTLRP) constitute a mitochondrion transit peptide.

It is found in the mitochondrion. Its function is as follows. May be involved in telomere capping. The protein is Maintenance of telomere capping protein 3, mitochondrial (MTC3) of Saccharomyces cerevisiae (strain ATCC 204508 / S288c) (Baker's yeast).